Reading from the N-terminus, the 364-residue chain is UDP-N-acetylglucosamine--N-acetylmuramyl-(pentapeptide) pyrophosphoryl-undecaprenol N-acetylglucosamine transferase (364 aa).

UDP-N-acetyl-alpha-D-glucosamine-binding positions include 10–12 (TGG), N128, R170, S199, I250, and Q295.

This sequence belongs to the glycosyltransferase 28 family. MurG subfamily.

The protein resides in the cell inner membrane. The catalysed reaction is di-trans,octa-cis-undecaprenyl diphospho-N-acetyl-alpha-D-muramoyl-L-alanyl-D-glutamyl-meso-2,6-diaminopimeloyl-D-alanyl-D-alanine + UDP-N-acetyl-alpha-D-glucosamine = di-trans,octa-cis-undecaprenyl diphospho-[N-acetyl-alpha-D-glucosaminyl-(1-&gt;4)]-N-acetyl-alpha-D-muramoyl-L-alanyl-D-glutamyl-meso-2,6-diaminopimeloyl-D-alanyl-D-alanine + UDP + H(+). Its pathway is cell wall biogenesis; peptidoglycan biosynthesis. Cell wall formation. Catalyzes the transfer of a GlcNAc subunit on undecaprenyl-pyrophosphoryl-MurNAc-pentapeptide (lipid intermediate I) to form undecaprenyl-pyrophosphoryl-MurNAc-(pentapeptide)GlcNAc (lipid intermediate II). The chain is UDP-N-acetylglucosamine--N-acetylmuramyl-(pentapeptide) pyrophosphoryl-undecaprenol N-acetylglucosamine transferase from Chlorobium limicola (strain DSM 245 / NBRC 103803 / 6330).